Reading from the N-terminus, the 720-residue chain is DNA gyrase subunit B (720 aa).

Positions 1 to 26 (MVDAMPENPAEEPTAASAAPNPEAVP) are enriched in low complexity. The tract at residues 1 to 42 (MVDAMPENPAEEPTAASAAPNPEAVPDAVGQPEAPVKDRKVP) is disordered. In terms of domain architecture, Toprim spans 498–612 (CEVYIVEGDS…AGHVFLAQPP (115 aa)). 3 residues coordinate Mg(2+): E504, D577, and D579.

The protein belongs to the type II topoisomerase GyrB family. Heterotetramer, composed of two GyrA and two GyrB chains. In the heterotetramer, GyrA contains the active site tyrosine that forms a transient covalent intermediate with the DNA, while GyrB binds cofactors and catalyzes ATP hydrolysis. It depends on Mg(2+) as a cofactor. The cofactor is Mn(2+). Ca(2+) serves as cofactor.

Its subcellular location is the cytoplasm. The catalysed reaction is ATP-dependent breakage, passage and rejoining of double-stranded DNA.. With respect to regulation, supercoiling activity inhibited by novobiocin and coumermycin, DNA wrapping around gyrase is not inhibited. Its function is as follows. A type II topoisomerase that negatively supercoils DNA in an ATP-dependent manner. About 140 bp of DNA wraps around gyrase in the presence or absence of ATP, when ATP is added negative supercoils are made. Functionally, a type II topoisomerase that negatively supercoils closed circular double-stranded (ds) DNA in an ATP-dependent manner to modulate DNA topology and maintain chromosomes in an underwound state. Negative supercoiling favors strand separation, and DNA replication, transcription, recombination and repair, all of which involve strand separation. Also able to catalyze the interconversion of other topological isomers of dsDNA rings, including catenanes and knotted rings. Type II topoisomerases break and join 2 DNA strands simultaneously in an ATP-dependent manner. This is DNA gyrase subunit B from Micrococcus luteus (strain ATCC 4698 / DSM 20030 / JCM 1464 / CCM 169 / CCUG 5858 / IAM 1056 / NBRC 3333 / NCIMB 9278 / NCTC 2665 / VKM Ac-2230) (Micrococcus lysodeikticus).